Here is a 190-residue protein sequence, read N- to C-terminus: Xanthine phosphoribosyltransferase (190 aa).

Xanthine-binding residues include Leu20 and Asn27. 5-phospho-alpha-D-ribose 1-diphosphate is bound at residue 128 to 132 (ANGHA). Lys156 provides a ligand contact to xanthine.

Belongs to the purine/pyrimidine phosphoribosyltransferase family. Xpt subfamily. Homodimer.

It localises to the cytoplasm. The catalysed reaction is XMP + diphosphate = xanthine + 5-phospho-alpha-D-ribose 1-diphosphate. The protein operates within purine metabolism; XMP biosynthesis via salvage pathway; XMP from xanthine: step 1/1. Functionally, converts the preformed base xanthine, a product of nucleic acid breakdown, to xanthosine 5'-monophosphate (XMP), so it can be reused for RNA or DNA synthesis. In Ectopseudomonas mendocina (strain ymp) (Pseudomonas mendocina), this protein is Xanthine phosphoribosyltransferase.